The sequence spans 1438 residues: DNA-directed RNA polymerase subunit beta' (1438 aa).

Zn(2+) contacts are provided by Cys-72, Cys-74, Cys-87, and Cys-90. Residues Asp-483, Asp-485, and Asp-487 each coordinate Mg(2+). Zn(2+) contacts are provided by Cys-831, Cys-905, Cys-912, and Cys-915.

Belongs to the RNA polymerase beta' chain family. In terms of assembly, the RNAP catalytic core consists of 2 alpha, 1 beta, 1 beta' and 1 omega subunit. When a sigma factor is associated with the core the holoenzyme is formed, which can initiate transcription. The cofactor is Mg(2+). Zn(2+) serves as cofactor.

It carries out the reaction RNA(n) + a ribonucleoside 5'-triphosphate = RNA(n+1) + diphosphate. DNA-dependent RNA polymerase catalyzes the transcription of DNA into RNA using the four ribonucleoside triphosphates as substrates. The chain is DNA-directed RNA polymerase subunit beta' from Flavobacterium psychrophilum (strain ATCC 49511 / DSM 21280 / CIP 103535 / JIP02/86).